The chain runs to 141 residues: Holo-[acyl-carrier-protein] synthase (141 aa).

Mg(2+) is bound by residues aspartate 7 and glutamate 57.

It belongs to the P-Pant transferase superfamily. AcpS family. It depends on Mg(2+) as a cofactor.

It localises to the cytoplasm. It carries out the reaction apo-[ACP] + CoA = holo-[ACP] + adenosine 3',5'-bisphosphate + H(+). In terms of biological role, transfers the 4'-phosphopantetheine moiety from coenzyme A to a Ser of acyl-carrier-protein. This chain is Holo-[acyl-carrier-protein] synthase, found in Corynebacterium efficiens (strain DSM 44549 / YS-314 / AJ 12310 / JCM 11189 / NBRC 100395).